Reading from the N-terminus, the 502-residue chain is ATP synthase subunit alpha (502 aa).

An ATP-binding site is contributed by 170-177 (GDRKTGKT).

The protein belongs to the ATPase alpha/beta chains family. As to quaternary structure, F-type ATPases have 2 components, CF(1) - the catalytic core - and CF(0) - the membrane proton channel. CF(1) has five subunits: alpha(3), beta(3), gamma(1), delta(1), epsilon(1). CF(0) has four main subunits: a, b, b' and c.

The protein localises to the cellular thylakoid membrane. The catalysed reaction is ATP + H2O + 4 H(+)(in) = ADP + phosphate + 5 H(+)(out). In terms of biological role, produces ATP from ADP in the presence of a proton gradient across the membrane. The alpha chain is a regulatory subunit. This chain is ATP synthase subunit alpha, found in Microcystis aeruginosa (strain NIES-843 / IAM M-2473).